A 536-amino-acid polypeptide reads, in one-letter code: CTP synthase (536 aa).

The interval 1 to 267 is amidoligase domain; sequence MSKFVFVTGG…CKQTLNCLEL (267 aa). Ser-13 provides a ligand contact to CTP. Residue Ser-13 participates in UTP binding. Residues 14 to 19 and Asp-71 contribute to the ATP site; that span reads SIGKGI. Positions 71 and 141 each coordinate Mg(2+). CTP-binding positions include 148–150, 188–193, and Lys-224; these read DIE and KTKPTQ. UTP is bound by residues 188–193 and Lys-224; that span reads KTKPTQ. The Glutamine amidotransferase type-1 domain maps to 292–534; it reads KVALVGKYIE…IKASQEKLEQ (243 aa). An L-glutamine-binding site is contributed by Gly-354. Cys-381 (nucleophile; for glutamine hydrolysis) is an active-site residue. Residues 382–385, Glu-405, and Arg-462 contribute to the L-glutamine site; that span reads LGMQ. Residues His-507 and Glu-509 contribute to the active site.

It belongs to the CTP synthase family. As to quaternary structure, homotetramer.

The enzyme catalyses UTP + L-glutamine + ATP + H2O = CTP + L-glutamate + ADP + phosphate + 2 H(+). The catalysed reaction is L-glutamine + H2O = L-glutamate + NH4(+). It carries out the reaction UTP + NH4(+) + ATP = CTP + ADP + phosphate + 2 H(+). It participates in pyrimidine metabolism; CTP biosynthesis via de novo pathway; CTP from UDP: step 2/2. Its activity is regulated as follows. Allosterically activated by GTP, when glutamine is the substrate; GTP has no effect on the reaction when ammonia is the substrate. The allosteric effector GTP functions by stabilizing the protein conformation that binds the tetrahedral intermediate(s) formed during glutamine hydrolysis. Inhibited by the product CTP, via allosteric rather than competitive inhibition. Catalyzes the ATP-dependent amination of UTP to CTP with either L-glutamine or ammonia as the source of nitrogen. Regulates intracellular CTP levels through interactions with the four ribonucleotide triphosphates. The sequence is that of CTP synthase from Prochlorococcus marinus subsp. pastoris (strain CCMP1986 / NIES-2087 / MED4).